The primary structure comprises 375 residues: Alanine racemase (375 aa).

Lysine 40 functions as the Proton acceptor; specific for D-alanine in the catalytic mechanism. Lysine 40 is subject to N6-(pyridoxal phosphate)lysine. Arginine 140 contacts substrate. Tyrosine 268 (proton acceptor; specific for L-alanine) is an active-site residue. Residue methionine 315 coordinates substrate.

This sequence belongs to the alanine racemase family. Pyridoxal 5'-phosphate serves as cofactor.

It catalyses the reaction L-alanine = D-alanine. Its pathway is amino-acid biosynthesis; D-alanine biosynthesis; D-alanine from L-alanine: step 1/1. Functionally, catalyzes the interconversion of L-alanine and D-alanine. May also act on other amino acids. This Limosilactobacillus reuteri (strain DSM 20016) (Lactobacillus reuteri) protein is Alanine racemase (alr).